A 404-amino-acid chain; its full sequence is Ribosomal RNA large subunit methyltransferase F (404 aa).

Basic residues-rich tracts occupy residues 1–10 (MTKHSQKQNR) and 18–29 (QTRRKKPAGKLK). Disordered regions lie at residues 1–54 (MTKH…HERN), 156–177 (GTRQ…QRYK), and 289–308 (RAAK…PDAN). Residues 30–54 (AKSEAKLDTRGKPETTEKKGLHERN) are compositionally biased toward basic and acidic residues. Residues 157 to 172 (TRQNVPYASKPESSAP) are compositionally biased toward polar residues.

Belongs to the methyltransferase superfamily. METTL16/RlmF family.

The protein localises to the cytoplasm. It carries out the reaction adenosine(1618) in 23S rRNA + S-adenosyl-L-methionine = N(6)-methyladenosine(1618) in 23S rRNA + S-adenosyl-L-homocysteine + H(+). Its function is as follows. Specifically methylates the adenine in position 1618 of 23S rRNA. The polypeptide is Ribosomal RNA large subunit methyltransferase F (Shewanella sediminis (strain HAW-EB3)).